The chain runs to 247 residues: Triosephosphate isomerase (247 aa).

A substrate-binding site is contributed by 10–12; sequence NWK. Residue His-92 is the Electrophile of the active site. The active-site Proton acceptor is the Glu-164. Residues Gly-170, Ser-209, and 230-231 each bind substrate; that span reads GG.

This sequence belongs to the triosephosphate isomerase family. In terms of assembly, homodimer.

It is found in the cytoplasm. The enzyme catalyses D-glyceraldehyde 3-phosphate = dihydroxyacetone phosphate. Its pathway is carbohydrate biosynthesis; gluconeogenesis. It functions in the pathway carbohydrate degradation; glycolysis; D-glyceraldehyde 3-phosphate from glycerone phosphate: step 1/1. In terms of biological role, involved in the gluconeogenesis. Catalyzes stereospecifically the conversion of dihydroxyacetone phosphate (DHAP) to D-glyceraldehyde-3-phosphate (G3P). The protein is Triosephosphate isomerase of Alcanivorax borkumensis (strain ATCC 700651 / DSM 11573 / NCIMB 13689 / SK2).